Reading from the N-terminus, the 89-residue chain is Otospiralin (89 aa).

An N-terminal signal peptide occupies residues 1 to 21 (MQACMVPGLALCLLLGPLAGA).

The protein belongs to the otospiralin family. In terms of tissue distribution, ear specific.

The protein resides in the secreted. In terms of biological role, may be essential for the survival of the neurosensory epithelium of the inner ear. In Homo sapiens (Human), this protein is Otospiralin (OTOS).